The following is a 132-amino-acid chain: MDSRTGEPITVPQAENGVYIWEITNPLYFKIISVEDPLYTNTRIYHLQIRFNHNLRRALDLHKAFLNFQVWTTSTTASGRTYLNRFKYLVMLYLEQLGVICINNVIRAVRFATDRSYITHVLENHSIKYKFY.

This sequence belongs to the geminiviridae replication enhancer protein family. As to quaternary structure, homooligomer. Interacts with the replication-associated protein (REP). Interacts with host proliferating cell nuclear antigen (PCNA). Interacts with host retinoblastoma-related protein 1 (RBR1), and may thereby deregulate the host cell cycle. Oligomerization and interaction with PCNA are necessary for optimal replication enhancement.

Increases viral DNA accumulation. Enhances infectivity and symptom expression. In Solanum lycopersicum (Tomato), this protein is Replication enhancer protein.